A 387-amino-acid chain; its full sequence is Exodeoxyribonuclease 7 large subunit (387 aa).

The protein belongs to the XseA family. In terms of assembly, heterooligomer composed of large and small subunits.

The protein localises to the cytoplasm. The enzyme catalyses Exonucleolytic cleavage in either 5'- to 3'- or 3'- to 5'-direction to yield nucleoside 5'-phosphates.. Functionally, bidirectionally degrades single-stranded DNA into large acid-insoluble oligonucleotides, which are then degraded further into small acid-soluble oligonucleotides. This chain is Exodeoxyribonuclease 7 large subunit, found in Parasynechococcus marenigrum (strain WH8102).